The following is a 238-amino-acid chain: Ribosomal RNA small subunit methyltransferase G (238 aa).

S-adenosyl-L-methionine-binding positions include Gly-78, Phe-83, Ala-129–Glu-130, and Arg-148. The disordered stretch occupies residues Lys-217–Lys-238.

Belongs to the methyltransferase superfamily. RNA methyltransferase RsmG family.

It localises to the cytoplasm. Specifically methylates the N7 position of a guanine in 16S rRNA. The protein is Ribosomal RNA small subunit methyltransferase G of Lactococcus lactis subsp. cremoris (strain MG1363).